The following is a 115-amino-acid chain: Succinate dehydrogenase hydrophobic membrane anchor subunit (115 aa).

The Cytoplasmic portion of the chain corresponds to 1–15; it reads MVSNASALGRNGVHD. A helical transmembrane segment spans residues 16–36; that stretch reads FILVRATAIVLTLYIIYMVGF. Residues 37 to 58 are Periplasmic-facing; the sequence is FATSGELTYEVWIGFFASAFTK. Residues 59–80 traverse the membrane as a helical segment; the sequence is VFTLLALFSILIHAWIGMWQVL. His-71 provides a ligand contact to heme. Over 81–90 the chain is Cytoplasmic; the sequence is TDYVKPLALR. Tyr-83 is an a ubiquinone binding site. A helical transmembrane segment spans residues 91 to 115; the sequence is LMLQLVIVVALVVYVIYGFVVVWGV.

In terms of assembly, part of an enzyme complex containing four subunits: a flavoprotein, an iron-sulfur protein, plus two membrane-anchoring proteins, SdhC and SdhD. The complex can form homotrimers. Heme serves as cofactor.

Its subcellular location is the cell inner membrane. Its pathway is carbohydrate metabolism; tricarboxylic acid cycle. Functionally, membrane-anchoring subunit of succinate dehydrogenase (SDH). The protein is Succinate dehydrogenase hydrophobic membrane anchor subunit (sdhD) of Escherichia coli O6:H1 (strain CFT073 / ATCC 700928 / UPEC).